The chain runs to 594 residues: DNA mismatch repair protein MutL (594 aa).

The protein belongs to the DNA mismatch repair MutL/HexB family.

Functionally, this protein is involved in the repair of mismatches in DNA. It is required for dam-dependent methyl-directed DNA mismatch repair. May act as a 'molecular matchmaker', a protein that promotes the formation of a stable complex between two or more DNA-binding proteins in an ATP-dependent manner without itself being part of a final effector complex. The sequence is that of DNA mismatch repair protein MutL from Rhizorhabdus wittichii (strain DSM 6014 / CCUG 31198 / JCM 15750 / NBRC 105917 / EY 4224 / RW1) (Sphingomonas wittichii).